A 432-amino-acid chain; its full sequence is N-acylneuraminate cytidylyltransferase (432 aa).

Residue Met-1 is modified to N-acetylmethionine. Positions Met-1–Glu-38 are disordered. The short motif at Pro-15–Arg-31 is the BC1 motif element. A compositionally biased stretch (basic residues) spans Arg-18–Arg-29. Arg-35 and Arg-50 each carry omega-N-methylarginine. 6 residues coordinate substrate: Arg-50, Asn-60, Arg-109, Ser-118, Ser-120, and Gln-141. The short motif at Lys-198–Asp-204 is the BC2 motif element. The active site involves Arg-199. The short motif at Lys-267–Lys-274 is the BC3 motif element.

This sequence belongs to the CMP-NeuNAc synthase family. In terms of assembly, homotetramer; the active enzyme is formed by a dimer of dimers. As to expression, highly expressed in brain and heart, and at intermediate level muscle and liver.

Its subcellular location is the nucleus. The enzyme catalyses an N-acylneuraminate + CTP = a CMP-N-acyl-beta-neuraminate + diphosphate. It functions in the pathway amino-sugar metabolism; N-acetylneuraminate metabolism. Catalyzes the activation of N-acetylneuraminic acid (NeuNAc) to cytidine 5'-monophosphate N-acetylneuraminic acid (CMP-NeuNAc), a substrate required for the addition of sialic acid. Has some activity toward NeuNAc, N-glycolylneuraminic acid (Neu5Gc) or 2-keto-3-deoxy-D-glycero-D-galacto-nononic acid (KDN). This is N-acylneuraminate cytidylyltransferase (Cmas) from Mus musculus (Mouse).